The following is a 786-amino-acid chain: Ribosome biogenesis protein BOP1 homolog (786 aa).

Residues 1–11 (MTKKLTIKRKV) are compositionally biased toward basic residues. Residues 1–161 (MTKKLTIKRK…DSDTSDEEDI (161 aa)) are disordered. Composition is skewed to acidic residues over residues 28 to 37 (DNEEEEEEDL), 46 to 55 (EDSTDDEGID), 62 to 74 (SSEDLEFESDEEG), and 86 to 103 (SGDDDEESAEDEEEEDDA). Basic and acidic residues predominate over residues 104–113 (DAKKSSKNND). Residues 151–160 (ADSDTSDEED) are compositionally biased toward acidic residues. WD repeat units follow at residues 447–488 (GHTD…RTIE), 490–528 (EDVVRCVAWCPNAKLSIIAVATGSRLLLVNPKVGDKLLV), 572–614 (THFK…SQIP), 617–655 (KSKGLIQCVLFHPVKPCFFVATQHNIRIYDLVKQELIKK), 658–697 (TNSKWISGMSIHPKGDNLLVSTYDKKMLWFDLDLSTKPYQ), 701–740 (LHRNAVRSVAFHLRYPLFASGSDDQAVIVSHGMVYNDLLQ), and 756–786 (REEFGVLDVNWHPVQPWVFSTGADCTIRLFT).

It belongs to the WD repeat BOP1/ERB1 family.

The protein localises to the nucleus. It localises to the nucleolus. The protein resides in the nucleoplasm. In terms of biological role, required for maturation of ribosomal RNAs and formation of the large ribosomal subunit. The polypeptide is Ribosome biogenesis protein BOP1 homolog (Drosophila pseudoobscura pseudoobscura (Fruit fly)).